Reading from the N-terminus, the 857-residue chain is Zinc finger protein 574 (857 aa).

14 consecutive C2H2-type zinc fingers follow at residues 15 to 37 (YVCS…QQSH), 58 to 80 (YQCL…QELH), 99 to 121 (YECP…RYTH), 206 to 228 (YKCS…QGTH), 297 to 319 (FSCG…QISH), 324 to 346 (FSCP…LKSH), 352 to 374 (YLCV…RRSH), 380 to 401 (FTCE…RRVH), 428 to 451 (FHCD…RFVH), 457 to 479 (HKCP…MLTH), 485 to 507 (YSCT…RLTH), 513 to 535 (YKCQ…QYVH), 541 to 563 (YKCN…QYHH), and 569 to 591 (YKCQ…QLGH). The C2H2-type 15; degenerate zinc-finger motif lies at 597–619 (HRCRECGTNFPSVQRLQDHRCSK). 5 consecutive C2H2-type zinc fingers follow at residues 628-651 (LECP…AAQH), 681-703 (LECS…RRIH), 709-731 (YPCP…RRLH), 737-759 (FKCD…KRIH), and 765-787 (HSCP…RKLH). The tract at residues 648–678 (AAQHSGNKRSNVSSGKGTPVLPRNKLKGGGG) is disordered. Residues 651 to 663 (HSGNKRSNVSSGK) show a composition bias toward polar residues.

It belongs to the krueppel C2H2-type zinc-finger protein family.

The protein resides in the nucleus. Functionally, may be involved in transcriptional regulation. The polypeptide is Zinc finger protein 574 (znf574) (Xenopus tropicalis (Western clawed frog)).